Here is a 293-residue protein sequence, read N- to C-terminus: Elongation factor Ts (293 aa).

The segment at 79–82 is involved in Mg(2+) ion dislocation from EF-Tu; sequence TDFV.

It belongs to the EF-Ts family.

The protein resides in the cytoplasm. Associates with the EF-Tu.GDP complex and induces the exchange of GDP to GTP. It remains bound to the aminoacyl-tRNA.EF-Tu.GTP complex up to the GTP hydrolysis stage on the ribosome. This is Elongation factor Ts (tsf) from Halalkalibacterium halodurans (strain ATCC BAA-125 / DSM 18197 / FERM 7344 / JCM 9153 / C-125) (Bacillus halodurans).